A 170-amino-acid polypeptide reads, in one-letter code: NADH-quinone oxidoreductase subunit B (170 aa).

C37, C38, C102, and C131 together coordinate [4Fe-4S] cluster.

This sequence belongs to the complex I 20 kDa subunit family. As to quaternary structure, NDH-1 is composed of 14 different subunits. Subunits NuoB, C, D, E, F, and G constitute the peripheral sector of the complex. [4Fe-4S] cluster is required as a cofactor.

It localises to the cell inner membrane. It catalyses the reaction a quinone + NADH + 5 H(+)(in) = a quinol + NAD(+) + 4 H(+)(out). In terms of biological role, NDH-1 shuttles electrons from NADH, via FMN and iron-sulfur (Fe-S) centers, to quinones in the respiratory chain. The immediate electron acceptor for the enzyme in this species is believed to be ubiquinone. Couples the redox reaction to proton translocation (for every two electrons transferred, four hydrogen ions are translocated across the cytoplasmic membrane), and thus conserves the redox energy in a proton gradient. The sequence is that of NADH-quinone oxidoreductase subunit B from Geotalea uraniireducens (strain Rf4) (Geobacter uraniireducens).